Here is a 115-residue protein sequence, read N- to C-terminus: Immunoglobulin kappa variable 5-2 (115 aa).

Positions 1 to 20 (MGSQVHLLSFLLLWISDTRA) are cleaved as a signal peptide. The segment at 21–43 (ETTLTQSPAFMSATPGDKVNISC) is framework-1. The region spanning 22-115 (TTLTQSPAFM…YFCLQHDNFP (94 aa)) is the Ig-like domain. N-linked (GlcNAc...) asparagine glycosylation occurs at N40. Position 42 is a phosphoserine (S42). C43 and C108 form a disulfide bridge. Residues 44–54 (KASQDIDDDMN) are complementarity-determining-1. The framework-2 stretch occupies residues 55–69 (WYQQKPGEAAIFIIQ). The interval 70–76 (EATTLVP) is complementarity-determining-2. Positions 77-108 (GIPPRFSGSGYGTDFTLTINNIESEDAAYYFC) are framework-3. The tract at residues 109–115 (LQHDNFP) is complementarity-determining-3.

Immunoglobulins are composed of two identical heavy chains and two identical light chains; disulfide-linked.

It is found in the secreted. Its subcellular location is the cell membrane. V region of the variable domain of immunoglobulin light chains that participates in the antigen recognition. Immunoglobulins, also known as antibodies, are membrane-bound or secreted glycoproteins produced by B lymphocytes. In the recognition phase of humoral immunity, the membrane-bound immunoglobulins serve as receptors which, upon binding of a specific antigen, trigger the clonal expansion and differentiation of B lymphocytes into immunoglobulins-secreting plasma cells. Secreted immunoglobulins mediate the effector phase of humoral immunity, which results in the elimination of bound antigens. The antigen binding site is formed by the variable domain of one heavy chain, together with that of its associated light chain. Thus, each immunoglobulin has two antigen binding sites with remarkable affinity for a particular antigen. The variable domains are assembled by a process called V-(D)-J rearrangement and can then be subjected to somatic hypermutations which, after exposure to antigen and selection, allow affinity maturation for a particular antigen. The polypeptide is Immunoglobulin kappa variable 5-2 (Homo sapiens (Human)).